Here is a 433-residue protein sequence, read N- to C-terminus: Enolase (433 aa).

Q167 is a binding site for (2R)-2-phosphoglycerate. The active-site Proton donor is E209. Residues D246, E291, and D318 each contribute to the Mg(2+) site. Positions 343, 372, 373, and 394 each coordinate (2R)-2-phosphoglycerate. K343 functions as the Proton acceptor in the catalytic mechanism.

This sequence belongs to the enolase family. Component of the RNA degradosome, a multiprotein complex involved in RNA processing and mRNA degradation. Mg(2+) serves as cofactor.

Its subcellular location is the cytoplasm. The protein resides in the secreted. It is found in the cell surface. It carries out the reaction (2R)-2-phosphoglycerate = phosphoenolpyruvate + H2O. It participates in carbohydrate degradation; glycolysis; pyruvate from D-glyceraldehyde 3-phosphate: step 4/5. In terms of biological role, catalyzes the reversible conversion of 2-phosphoglycerate (2-PG) into phosphoenolpyruvate (PEP). It is essential for the degradation of carbohydrates via glycolysis. This Shewanella piezotolerans (strain WP3 / JCM 13877) protein is Enolase.